Consider the following 184-residue polypeptide: MSRLGFGERVRACVLTGDQISRSLRRISHEILERNASSLEELALVGILTRGVPLAHRIAGNIRRFEGLEVPVGALDITLHRDDLDGEDPEVKGSHIPFEVAGRTVVMVDDVLFTGRTARAAMDALLERGRPAAIQLAVLVDRGHRELPIRADYVGKNIPTSLGESVRVGLVETDGEDGVVVVGS.

The short motif at 105–117 is the PRPP-binding element; it reads VVMVDDVLFTGRT.

Belongs to the purine/pyrimidine phosphoribosyltransferase family. PyrR subfamily.

The enzyme catalyses UMP + diphosphate = 5-phospho-alpha-D-ribose 1-diphosphate + uracil. Its function is as follows. Regulates the transcription of the pyrimidine nucleotide (pyr) operon in response to exogenous pyrimidines. In terms of biological role, also displays a weak uracil phosphoribosyltransferase activity which is not physiologically significant. In Rubrobacter xylanophilus (strain DSM 9941 / JCM 11954 / NBRC 16129 / PRD-1), this protein is Bifunctional protein PyrR.